The following is a 403-amino-acid chain: Imidazolonepropionase (403 aa).

Residues His69 and His71 each coordinate Fe(3+). Zn(2+) contacts are provided by His69 and His71. The 4-imidazolone-5-propanoate site is built by Arg78, Tyr141, and His174. Tyr141 contributes to the N-formimidoyl-L-glutamate binding site. His239 is a binding site for Fe(3+). Residue His239 participates in Zn(2+) binding. Position 242 (Gln242) interacts with 4-imidazolone-5-propanoate. Asp314 contacts Fe(3+). Asp314 serves as a coordination point for Zn(2+). Residues Asn316 and Gly318 each coordinate N-formimidoyl-L-glutamate. Ser319 serves as a coordination point for 4-imidazolone-5-propanoate.

This sequence belongs to the metallo-dependent hydrolases superfamily. HutI family. Zn(2+) is required as a cofactor. It depends on Fe(3+) as a cofactor.

The protein localises to the cytoplasm. The enzyme catalyses 4-imidazolone-5-propanoate + H2O = N-formimidoyl-L-glutamate. The protein operates within amino-acid degradation; L-histidine degradation into L-glutamate; N-formimidoyl-L-glutamate from L-histidine: step 3/3. Functionally, catalyzes the hydrolytic cleavage of the carbon-nitrogen bond in imidazolone-5-propanoate to yield N-formimidoyl-L-glutamate. It is the third step in the universal histidine degradation pathway. This Legionella pneumophila (strain Corby) protein is Imidazolonepropionase.